The sequence spans 828 residues: Protein kintoun (828 aa).

Disordered regions lie at residues 1 to 31 (MSGSTASARNKHSKGNLKHNNNKNKNNDEPI), 223 to 250 (KNPTDEELEPHPLEHSFPTKPTAGEGEP), 383 to 424 (DSGV…PTSN), 556 to 668 (APVQ…HRGI), and 741 to 828 (KKNQ…EDLI). Positions 9 to 22 (RNKHSKGNLKHNNN) are enriched in basic residues. Ser-384 carries the post-translational modification Phosphoserine. The segment covering 395–414 (PVEEEEDGEDEIEAEEEEEE) has biased composition (acidic residues). Residues 556-573 (APVQEDKPGDIQFKRNDQ) are compositionally biased toward basic and acidic residues. Positions 591 to 601 (EREEGEIEEAE) are enriched in acidic residues. A compositionally biased stretch (basic residues) spans 606-620 (KKSASKKQRGKRNKK). Residues 625–641 (SESACVSLPTSVDSQPM) show a composition bias toward polar residues. Residues 741–755 (KKNQKRRDCKLRAQQ) are compositionally biased toward basic residues. The residue at position 759 (Ser-759) is a Phosphoserine. Over residues 788 to 808 (DSGLDLTRHNKKRELAEEADN) the composition is skewed to basic and acidic residues. Residues 815–828 (EMDDDDDDEDEDLI) show a composition bias toward acidic residues.

It belongs to the PIH1 family. Kintoun subfamily. Interacts with Pp1alpha-96A, Pp1-87B, Pp1-13C and flw.

It localises to the cytoplasm. In terms of biological role, required for cytoplasmic pre-assembly of axonemal dyneins, thereby playing a central role in motility in cilia and flagella. Involved in pre-assembly of dynein arm complexes in the cytoplasm before intraflagellar transport loads them for the ciliary compartment. The chain is Protein kintoun from Drosophila willistoni (Fruit fly).